Reading from the N-terminus, the 379-residue chain is F-box protein At1g67340 (379 aa).

One can recognise an F-box domain in the interval 41–92 (ADLLDSIPDDLVISILCKLGSTSRCPADFINVLLTCKRLKGLAMNPIVLSRL). Residues H304, C307, C320, C323, C329, C333, H342, and C346 each coordinate Zn(2+). An MYND-type; atypical zinc finger spans residues 304–346 (HAGCGRPETRKHEFRRCSVCGVVNYCSRACQALDWKLRHKMDC). The disordered stretch occupies residues 358-379 (GGEGNVQIDGNGNGDNVLLPMS).

Part of a SCF (ASK-cullin-F-box) protein ligase complex. Interacts with SKP1A/ASK1, SKP1B/ASK2, ASK4, ASK11 and ASK13.

It is found in the nucleus. Its pathway is protein modification; protein ubiquitination. Component of SCF(ASK-cullin-F-box) E3 ubiquitin ligase complexes, which may mediate the ubiquitination and subsequent proteasomal degradation of target proteins. The polypeptide is F-box protein At1g67340 (Arabidopsis thaliana (Mouse-ear cress)).